The chain runs to 302 residues: uncharacterized protein (302 aa).

Belongs to the HAD-like hydrolase superfamily.

This is an uncharacterized protein from Saccharomyces cerevisiae (strain ATCC 204508 / S288c) (Baker's yeast).